Here is a 470-residue protein sequence, read N- to C-terminus: UDP-glycosyltransferase 72D1 (470 aa).

Residues Ser-276, 343 to 345 (APQ), 360 to 368 (HCGWSSALE), and 382 to 385 (YAEQ) contribute to the UDP-alpha-D-glucose site.

The protein belongs to the UDP-glycosyltransferase family.

The chain is UDP-glycosyltransferase 72D1 (UGT72D1) from Arabidopsis thaliana (Mouse-ear cress).